The sequence spans 210 residues: ESCRT-III complex subunit did4 (210 aa).

The disordered stretch occupies residues 1–38 (MGLTSWLFGGGKSPQEQLRAHQRSLGRAERELDRERTK). A coiled-coil region spans residues 15-97 (QEQLRAHQRS…AISLRLQTMR (83 aa)). The span at 26–38 (GRAERELDRERTK) shows a compositional bias: basic and acidic residues.

This sequence belongs to the SNF7 family. In terms of assembly, core component of the ESCRT-III complex (endosomal sorting required for transport complex III). ESCRT-III appears to be sequentially assembled as a flat lattice on the endosome membrane.

It is found in the cytoplasm. The protein localises to the endosome membrane. In terms of biological role, required for the sorting and concentration of proteins resulting in the entry of these proteins into the invaginating vesicles of the multivesicular body (MVB). Acts a component of the ESCRT-III complex, which appears to be critical for late steps in MVB sorting, such as membrane invagination and final cargo sorting and recruitment of late-acting components of the sorting machinery. The MVB pathway requires the sequential function of ESCRT-O, -I,-II and -III complex assemblies. The protein is ESCRT-III complex subunit did4 (did4) of Schizosaccharomyces pombe (strain 972 / ATCC 24843) (Fission yeast).